A 601-amino-acid polypeptide reads, in one-letter code: Elongation factor 4 (601 aa).

A tr-type G domain is found at 6 to 188 (DHIRNFSIVA…AIVHQLPPPR (183 aa)). Residues 18–23 (DHGKST) and 135–138 (NKVD) contribute to the GTP site.

It belongs to the TRAFAC class translation factor GTPase superfamily. Classic translation factor GTPase family. LepA subfamily.

It localises to the cell inner membrane. It catalyses the reaction GTP + H2O = GDP + phosphate + H(+). Required for accurate and efficient protein synthesis under certain stress conditions. May act as a fidelity factor of the translation reaction, by catalyzing a one-codon backward translocation of tRNAs on improperly translocated ribosomes. Back-translocation proceeds from a post-translocation (POST) complex to a pre-translocation (PRE) complex, thus giving elongation factor G a second chance to translocate the tRNAs correctly. Binds to ribosomes in a GTP-dependent manner. The chain is Elongation factor 4 from Mesorhizobium japonicum (strain LMG 29417 / CECT 9101 / MAFF 303099) (Mesorhizobium loti (strain MAFF 303099)).